The following is a 325-amino-acid chain: Cytochrome c1, heme protein, mitochondrial (325 aa).

The N-terminal 84 residues, 1–84, are a transit peptide targeting the mitochondrion; it reads MAAAAASLRG…AMALHSAVSA (84 aa). Over 85–281 the chain is Mitochondrial intermembrane; sequence SDLELHPPSY…TFLRWASEPE (197 aa). A Cytochrome c domain is found at 108–209; sequence TSIRRGFQVY…IVRARHGGED (102 aa). Heme c contacts are provided by Cys121, Cys124, and His125. Ser182 bears the Phosphoserine mark. A heme c-binding site is contributed by Met244. The helical transmembrane segment at 282–315 threads the bilayer; it reads HDHRKRMGLKMLMMMALLVPLVYTIKRHKWSVLK. At 316-325 the chain is on the mitochondrial matrix side; sequence SRKLAYRPPK.

It belongs to the cytochrome c family. Component of the ubiquinol-cytochrome c oxidoreductase (cytochrome b-c1 complex, complex III, CIII), a multisubunit enzyme composed of 11 subunits. The complex is composed of 3 respiratory subunits cytochrome b, cytochrome c1 and Rieske protein UQCRFS1, 2 core protein subunits UQCRC1/QCR1 and UQCRC2/QCR2, and 6 low-molecular weight protein subunits UQCRH/QCR6, UQCRB/QCR7, UQCRQ/QCR8, UQCR10/QCR9, UQCR11/QCR10 and subunit 9, the cleavage product of Rieske protein UQCRFS1. The complex exists as an obligatory dimer and forms supercomplexes (SCs) in the inner mitochondrial membrane with NADH-ubiquinone oxidoreductase (complex I, CI) and cytochrome c oxidase (complex IV, CIV), resulting in different assemblies (supercomplex SCI(1)III(2)IV(1) and megacomplex MCI(2)III(2)IV(2)). Interacts with FLVCR2; this interaction occurs in the absence of heme and is disrupted upon heme binding. Heme c serves as cofactor.

The protein resides in the mitochondrion inner membrane. The catalysed reaction is a quinol + 2 Fe(III)-[cytochrome c](out) = a quinone + 2 Fe(II)-[cytochrome c](out) + 2 H(+)(out). Component of the ubiquinol-cytochrome c oxidoreductase, a multisubunit transmembrane complex that is part of the mitochondrial electron transport chain which drives oxidative phosphorylation. The respiratory chain contains 3 multisubunit complexes succinate dehydrogenase (complex II, CII), ubiquinol-cytochrome c oxidoreductase (cytochrome b-c1 complex, complex III, CIII) and cytochrome c oxidase (complex IV, CIV), that cooperate to transfer electrons derived from NADH and succinate to molecular oxygen, creating an electrochemical gradient over the inner membrane that drives transmembrane transport and the ATP synthase. The cytochrome b-c1 complex catalyzes electron transfer from ubiquinol to cytochrome c, linking this redox reaction to translocation of protons across the mitochondrial inner membrane, with protons being carried across the membrane as hydrogens on the quinol. In the process called Q cycle, 2 protons are consumed from the matrix, 4 protons are released into the intermembrane space and 2 electrons are passed to cytochrome c. Cytochrome c1 is a catalytic core subunit containing a c-type heme. It transfers electrons from the [2Fe-2S] iron-sulfur cluster of the Rieske protein to cytochrome c. The protein is Cytochrome c1, heme protein, mitochondrial (CYC1) of Homo sapiens (Human).